The primary structure comprises 352 residues: Biotin synthase (352 aa).

A Radical SAM core domain is found at 44 to 262 (NRVQVSTLLS…LAVARIMMPK (219 aa)). [4Fe-4S] cluster contacts are provided by Cys-59, Cys-63, and Cys-66. Residues Cys-103, Cys-134, Cys-194, and Arg-266 each contribute to the [2Fe-2S] cluster site.

It belongs to the radical SAM superfamily. Biotin synthase family. In terms of assembly, homodimer. Requires [4Fe-4S] cluster as cofactor. [2Fe-2S] cluster is required as a cofactor.

The enzyme catalyses (4R,5S)-dethiobiotin + (sulfur carrier)-SH + 2 reduced [2Fe-2S]-[ferredoxin] + 2 S-adenosyl-L-methionine = (sulfur carrier)-H + biotin + 2 5'-deoxyadenosine + 2 L-methionine + 2 oxidized [2Fe-2S]-[ferredoxin]. It functions in the pathway cofactor biosynthesis; biotin biosynthesis; biotin from 7,8-diaminononanoate: step 2/2. In terms of biological role, catalyzes the conversion of dethiobiotin (DTB) to biotin by the insertion of a sulfur atom into dethiobiotin via a radical-based mechanism. The chain is Biotin synthase from Pseudomonas aeruginosa (strain LESB58).